Consider the following 241-residue polypeptide: tRNA (guanine-N(1)-)-methyltransferase (241 aa).

S-adenosyl-L-methionine is bound by residues glycine 108 and 127–132 (LGDYVL).

The protein belongs to the RNA methyltransferase TrmD family. In terms of assembly, homodimer.

It localises to the cytoplasm. The catalysed reaction is guanosine(37) in tRNA + S-adenosyl-L-methionine = N(1)-methylguanosine(37) in tRNA + S-adenosyl-L-homocysteine + H(+). Its function is as follows. Specifically methylates guanosine-37 in various tRNAs. This Streptococcus suis (strain 98HAH33) protein is tRNA (guanine-N(1)-)-methyltransferase.